Reading from the N-terminus, the 382-residue chain is V-type proton ATPase subunit C 1 (382 aa).

An N-acetylthreonine modification is found at Thr-2.

It belongs to the V-ATPase C subunit family. In terms of assembly, V-ATPase is a heteromultimeric enzyme made up of two complexes: the ATP-hydrolytic V1 complex and the proton translocation V0 complex. The V1 complex consists of three catalytic AB heterodimers that form a heterohexamer, three peripheral stalks each consisting of EG heterodimers, one central rotor including subunits D and F, and the regulatory subunits C and H. The proton translocation complex V0 consists of the proton transport subunit a, a ring of proteolipid subunits c9c'', rotary subunit d, subunits e and f, and the accessory subunits ATP6AP1/Ac45 and ATP6AP2/PRR. As to expression, expressed in brain (at protein level).

The protein resides in the cytoplasmic vesicle. It is found in the secretory vesicle. Its subcellular location is the synaptic vesicle membrane. The protein localises to the clathrin-coated vesicle membrane. Functionally, subunit of the V1 complex of vacuolar(H+)-ATPase (V-ATPase), a multisubunit enzyme composed of a peripheral complex (V1) that hydrolyzes ATP and a membrane integral complex (V0) that translocates protons. V-ATPase is responsible for acidifying and maintaining the pH of intracellular compartments and in some cell types, is targeted to the plasma membrane, where it is responsible for acidifying the extracellular environment. Subunit C is necessary for the assembly of the catalytic sector of the enzyme and is likely to have a specific function in its catalytic activity. The sequence is that of V-type proton ATPase subunit C 1 (ATP6V1C1) from Bos taurus (Bovine).